A 146-amino-acid chain; its full sequence is Large ribosomal subunit protein bL19 (146 aa).

The segment at 119-146 is disordered; the sequence is DYRKKGEKGVEKVETTPVSADIETQVAE.

It belongs to the bacterial ribosomal protein bL19 family.

This protein is located at the 30S-50S ribosomal subunit interface and may play a role in the structure and function of the aminoacyl-tRNA binding site. The chain is Large ribosomal subunit protein bL19 from Bartonella tribocorum (strain CIP 105476 / IBS 506).